The primary structure comprises 253 residues: Phosphoglycerate mutase 2 (253 aa).

At Thr-3 the chain carries Phosphothreonine. Residues 10–17 (RHGESTWN), 23–24 (CG), Arg-62, 89–92 (ERHY), Lys-100, and 116–117 (RR) contribute to the substrate site. Catalysis depends on His-11, which acts as the Tele-phosphohistidine intermediate. Residue Ser-14 is modified to Phosphoserine. The active-site Proton donor/acceptor is Glu-89. A Phosphoserine modification is found at Ser-118. A phosphotyrosine mark is found at Tyr-132 and Tyr-133. Ser-135 bears the Phosphoserine mark. Thr-152 is subject to Phosphothreonine. 187–188 (GN) provides a ligand contact to substrate.

This sequence belongs to the phosphoglycerate mutase family. BPG-dependent PGAM subfamily. In terms of assembly, homodimer.

The enzyme catalyses (2R)-2-phosphoglycerate = (2R)-3-phosphoglycerate. It carries out the reaction (2R)-3-phospho-glyceroyl phosphate = (2R)-2,3-bisphosphoglycerate + H(+). Functionally, interconversion of 3- and 2-phosphoglycerate with 2,3-bisphosphoglycerate as the primer of the reaction. Can also catalyze the reaction of EC 5.4.2.4 (synthase), but with a reduced activity. In Bos taurus (Bovine), this protein is Phosphoglycerate mutase 2 (PGAM2).